We begin with the raw amino-acid sequence, 890 residues long: Nucleoside hydrolase 3 (890 aa).

An N-terminal signal peptide occupies residues 1 to 21; it reads MLTSPTLKSLWFLFTILGLLG. Asparagine 55, asparagine 232, asparagine 371, asparagine 485, asparagine 580, asparagine 655, and asparagine 740 each carry an N-linked (GlcNAc...) asparagine glycan.

It belongs to the IUNH family.

Its subcellular location is the secreted. It localises to the extracellular space. The protein localises to the apoplast. The enzyme catalyses a purine D-ribonucleoside + H2O = a purine nucleobase + D-ribose. It carries out the reaction inosine + H2O = hypoxanthine + D-ribose. The catalysed reaction is adenosine + H2O = D-ribose + adenine. Functionally, extracellular purine-specific hydrolase present in the apoplastic fluid involved in the degradation of extracellular nucleosides, including inosine and adenosine, and which may participate in wound and pathogen responses (e.g. Botrytis cinerea). This is Nucleoside hydrolase 3 from Arabidopsis thaliana (Mouse-ear cress).